Consider the following 294-residue polypeptide: 4-diphosphocytidyl-2-C-methyl-D-erythritol kinase (294 aa).

Lys11 is a catalytic residue. ATP is bound at residue 96–106; the sequence is PVAAGIGGGSA. Asp138 is a catalytic residue.

It belongs to the GHMP kinase family. IspE subfamily.

The catalysed reaction is 4-CDP-2-C-methyl-D-erythritol + ATP = 4-CDP-2-C-methyl-D-erythritol 2-phosphate + ADP + H(+). Its pathway is isoprenoid biosynthesis; isopentenyl diphosphate biosynthesis via DXP pathway; isopentenyl diphosphate from 1-deoxy-D-xylulose 5-phosphate: step 3/6. Its function is as follows. Catalyzes the phosphorylation of the position 2 hydroxy group of 4-diphosphocytidyl-2C-methyl-D-erythritol. The polypeptide is 4-diphosphocytidyl-2-C-methyl-D-erythritol kinase (Rhodopseudomonas palustris (strain BisB5)).